A 386-amino-acid polypeptide reads, in one-letter code: Heat-inducible transcription repressor HrcA (386 aa).

Belongs to the HrcA family.

Functionally, negative regulator of class I heat shock genes (grpE-dnaK-dnaJ and groELS operons). Prevents heat-shock induction of these operons. This is Heat-inducible transcription repressor HrcA from Chlamydia felis (strain Fe/C-56) (Chlamydophila felis).